Reading from the N-terminus, the 513-residue chain is Teichoic acid ribitol-phosphate polymerase TarK (513 aa).

The protein belongs to the CDP-glycerol glycerophosphotransferase family.

The protein resides in the cell membrane. It carries out the reaction 4-O-[di(2R)-glycerylphospho]-N-acetyl-beta-D-mannosaminyl-(1-&gt;4)-N-acetyl-alpha-D-glucosaminyl di-trans,octa-cis-undecaprenyl diphosphate + n CDP-L-ribitol = 4-O-[(D-ribitylphospho)(n)-di{(2R)-glycerylphospho}]-N-acetyl-beta-D-mannosaminyl-(1-&gt;4)-N-acetyl-alpha-D-glucosaminyl di-trans,octa-cis-undecaprenyl diphosphate + n CMP + n H(+). It participates in cell wall biogenesis; poly(ribitol phosphate) teichoic acid biosynthesis. In terms of biological role, can catalyze the polymerization of the main chain of the major teichoic acid by sequential transfer of ribitol phosphate units from CDP-ribitol to the second glycerol phosphate attached to the disaccharide linkage unit. The sequence is that of Teichoic acid ribitol-phosphate polymerase TarK (tarK) from Staphylococcus aureus (strain NCTC 8325 / PS 47).